The primary structure comprises 271 residues: Mannosyl-3-phosphoglycerate phosphatase (271 aa).

Catalysis depends on Asp-13, which acts as the Nucleophile. Residues Asp-13, Asp-15, and Asp-214 each contribute to the Mg(2+) site.

Belongs to the HAD-like hydrolase superfamily. MPGP family. Mg(2+) serves as cofactor.

The protein localises to the cytoplasm. It catalyses the reaction 2-O-(alpha-D-mannosyl)-3-phosphoglycerate + H2O = (2R)-2-O-(alpha-D-mannosyl)-glycerate + phosphate. This Escherichia coli (strain SE11) protein is Mannosyl-3-phosphoglycerate phosphatase.